Reading from the N-terminus, the 226-residue chain is Brachyurin (226 aa).

One can recognise a Peptidase S1 domain in the interval 1-223; sequence IVGGVEAVPN…FLDWIQTQTG (223 aa). A disulfide bridge links Cys26 with Cys42. Catalysis depends on charge relay system residues His41 and Asp87. 2 disulfides stabilise this stretch: Cys151-Cys164 and Cys174-Cys200. Catalysis depends on Ser178, which acts as the Charge relay system.

This sequence belongs to the peptidase S1 family.

It carries out the reaction Hydrolysis of proteins, with broad specificity for peptide bonds. Native collagen is cleaved about 75% of the length of the molecule from the N-terminus. Low activity on small molecule substrates of both trypsin and chymotrypsin.. Functionally, this enzyme is a serine protease capable of degrading the native triple helix of collagen. This Leptuca pugilator (Atlantic sand fiddler crab) protein is Brachyurin.